Reading from the N-terminus, the 199-residue chain is MKHLVLASGNAGKLEELRAMLAGLPLRIVAQGELGVDDVPETGLTFVENALIKARHASAVTGLPALADDSGLIVDALDGAPGLYSARYAGSPTNALANNAKLLDAMRGVPAERRSARFYAVIVLLRHPEDPQPLIAEGSWEGTITTEPRGDGGFGYNPVFLDPVYGLTAAEMDSALKNRLSHRAVALATLQHKLHALSL.

Substrate is bound at residue 8–13 (SGNAGK). Asp-69 acts as the Proton acceptor in catalysis. Asp-69 contributes to the Mg(2+) binding site. Substrate-binding positions include Ser-70, 154 to 157 (FGYN), Lys-177, and 182 to 183 (HR).

This sequence belongs to the HAM1 NTPase family. Homodimer. It depends on Mg(2+) as a cofactor.

It catalyses the reaction XTP + H2O = XMP + diphosphate + H(+). The enzyme catalyses dITP + H2O = dIMP + diphosphate + H(+). It carries out the reaction ITP + H2O = IMP + diphosphate + H(+). Its function is as follows. Pyrophosphatase that catalyzes the hydrolysis of nucleoside triphosphates to their monophosphate derivatives, with a high preference for the non-canonical purine nucleotides XTP (xanthosine triphosphate), dITP (deoxyinosine triphosphate) and ITP. Seems to function as a house-cleaning enzyme that removes non-canonical purine nucleotides from the nucleotide pool, thus preventing their incorporation into DNA/RNA and avoiding chromosomal lesions. This chain is dITP/XTP pyrophosphatase, found in Xanthomonas oryzae pv. oryzae (strain KACC10331 / KXO85).